Reading from the N-terminus, the 149-residue chain is Probable glycine cleavage system H protein 2 (149 aa).

The 83-residue stretch at 32 to 114 (IAVVGITDLA…YGQGWIAKIK (83 aa)) folds into the Lipoyl-binding domain. N6-lipoyllysine is present on Lys-73.

This sequence belongs to the GcvH family. As to quaternary structure, the glycine cleavage system is composed of four proteins: P, T, L and H. (R)-lipoate is required as a cofactor.

Functionally, the glycine cleavage system catalyzes the degradation of glycine. The H protein shuttles the methylamine group of glycine from the P protein to the T protein. This is Probable glycine cleavage system H protein 2 from Sulfolobus acidocaldarius (strain ATCC 33909 / DSM 639 / JCM 8929 / NBRC 15157 / NCIMB 11770).